The sequence spans 248 residues: Peroxisomal membrane protein 11A (248 aa).

Residues M1 to E97 lie on the Cytoplasmic side of the membrane. A helical membrane pass occupies residues L98–I118. At W119–K220 the chain is on the lumenal side. A helical transmembrane segment spans residues G221 to T241. Residues H242–C248 are Cytoplasmic-facing.

Belongs to the peroxin-11 family. As to quaternary structure, homooligomer. Interacts with ARC5 and FIS1B on peroxisomes. Expressed in developing siliques.

It localises to the peroxisome membrane. Its function is as follows. Involved in peroxisomal proliferation. Promotes peroxisomal duplication, aggregation or elongation without fission. This Arabidopsis thaliana (Mouse-ear cress) protein is Peroxisomal membrane protein 11A (PEX11A).